Reading from the N-terminus, the 202-residue chain is MAKQIFYTLFLFLLSTAILTASSSAPRAAITSKRAINFIQASCKATTYPTVCVNSLTGYANSIQTSPRRLAETALNVTVTQAQSTKVFVWRLGRFTSLKKREIQAVKDCIEEIHDAVDRLTMSIHEVKMCGSAKGRDQFWFHMSNAQTWTSAALTNANTCSDGFAGRVMDGRVKNSVRARILNLGRGTSNALALINAFAKKY.

An N-terminal signal peptide occupies residues Met-1 to Ala-21. Cys-43 and Cys-52 are joined by a disulfide. Asn-76 carries an N-linked (GlcNAc...) asparagine glycan. A disulfide bridge links Cys-109 with Cys-160.

It belongs to the PMEI family.

The protein localises to the secreted. It localises to the extracellular space. The protein resides in the apoplast. In terms of biological role, pectin methylesterase (PME) inhibitor involved in the maintenance of cell wall integrity in response to necrotrophic pathogens. Modulates PME activity and pectin methylesterification during infection by Botrytis cinerea and contributes to resistance against the pathogen. The chain is Pectinesterase inhibitor 11 from Arabidopsis thaliana (Mouse-ear cress).